The following is a 37-amino-acid chain: Photosystem II reaction center protein K (37 aa).

At lysine 1–valine 15 the chain is on the lumenal side. The helical transmembrane segment at leucine 16–valine 30 threads the bilayer. Residues glutamine 31–arginine 37 are Cytoplasmic-facing.

This sequence belongs to the PsbK family. PSII is composed of 1 copy each of membrane proteins PsbA, PsbB, PsbC, PsbD, PsbE, PsbF, PsbH, PsbI, PsbJ, PsbK, PsbL, PsbM, PsbT, PsbX, PsbY, PsbZ, Psb30/Ycf12, peripheral proteins PsbO, CyanoQ (PsbQ), PsbU, PsbV and a large number of cofactors. It forms dimeric complexes. It depends on PSII binds multiple chlorophylls, carotenoids and specific lipids. as a cofactor.

The protein resides in the cellular thylakoid membrane. In terms of biological role, one of the components of the core complex of photosystem II (PSII). PSII is a light-driven water:plastoquinone oxidoreductase that uses light energy to abstract electrons from H(2)O, generating O(2) and a proton gradient subsequently used for ATP formation. It consists of a core antenna complex that captures photons, and an electron transfer chain that converts photonic excitation into a charge separation. In Thermostichus vulcanus (Synechococcus vulcanus), this protein is Photosystem II reaction center protein K.